The primary structure comprises 198 residues: Nuclear transcription factor Y subunit A-4 (198 aa).

The tract at residues 1–47 (MTSSVHELSDNNESHAKKERPDSQTRPQVPSGRSSESIDTNSVYSEP) is disordered. The span at 7-23 (ELSDNNESHAKKERPDS) shows a compositional bias: basic and acidic residues. Positions 24-44 (QTRPQVPSGRSSESIDTNSVY) are enriched in polar residues. The Subunit association domain (SAD) motif lies at 101–124 (FVNAKQYHGILRRRQSRAKLEARN). A DNA-binding region (NFYA/HAP2-type) is located at residues 131 to 156 (KPYMHESRHLHAIRRPRGCGGRFLNA). A disordered region spans residues 136–198 (ESRHLHAIRR…MATSGPNGRS (63 aa)). Basic and acidic residues predominate over residues 156–166 (AKKENGDHKEE).

The protein belongs to the NFYA/HAP2 subunit family. In terms of assembly, heterotrimeric transcription factor composed of three components, NF-YA, NF-YB and NF-YC. NF-YB and NF-YC must interact and dimerize for NF-YA association and DNA binding. Expressed in stems, caulines, and senescent flowers.

It localises to the nucleus. Its function is as follows. Stimulates the transcription of various genes by recognizing and binding to a CCAAT motif in promoters. The sequence is that of Nuclear transcription factor Y subunit A-4 (NFYA4) from Arabidopsis thaliana (Mouse-ear cress).